Reading from the N-terminus, the 135-residue chain is Cytochrome c-type biogenesis protein CcmE (135 aa).

The Cytoplasmic portion of the chain corresponds to 1–8; sequence MLLLRWKR. The chain crosses the membrane as a helical; Signal-anchor for type II membrane protein span at residues 9-29; that stretch reads FWFLSLGILLFSGVVSLMLFN. Residues 30–135 lie on the Periplasmic side of the membrane; that stretch reads LSESISFFYL…EDFIKSVRGE (106 aa). His-118 and Tyr-122 together coordinate heme.

The protein belongs to the CcmE/CycJ family.

It localises to the cell inner membrane. Heme chaperone required for the biogenesis of c-type cytochromes. Transiently binds heme delivered by CcmC and transfers the heme to apo-cytochromes in a process facilitated by CcmF and CcmH. The sequence is that of Cytochrome c-type biogenesis protein CcmE from Neorickettsia sennetsu (strain ATCC VR-367 / Miyayama) (Ehrlichia sennetsu).